A 131-amino-acid chain; its full sequence is Profilin-2 (131 aa).

It belongs to the profilin family. As to quaternary structure, occurs in many kinds of cells as a complex with monomeric actin in a 1:1 ratio. As to expression, expressed in vascular bundles of roots, hypocotyls, cotyledons, leaves, sepals, petals, stamen filaments and stalks of developing seeds. Expressed in leaf epidermal cells, trichomes and stem epidermal cells. Detected in phloem exudates (at protein level).

The protein resides in the cytoplasm. It is found in the cytoskeleton. The protein localises to the endoplasmic reticulum. Its subcellular location is the cytosol. It localises to the nucleus. Its function is as follows. Binds to actin monomers and regulates the organization of the actin cytoskeleton. At high concentrations, profilin prevents the polymerization of actin, whereas it enhances it at low concentrations. At low concentrations, associates with the poly-proline motif of formins to enhance actin filament elongation rate. Binds G-actin and poly-L-proline with low affinity in vitro. Binds ACT1, ACT7 and ACT11 and inhibits actin polymerization. May be involved in the cross-talk between vesicular trafficking and the actin cytoskeleton. Inhibits cell growth of various pathogenic fungal strains. May play a role as antifungal proteins in the defense system against fungal pathogen attacks. The polypeptide is Profilin-2 (Arabidopsis thaliana (Mouse-ear cress)).